Here is a 292-residue protein sequence, read N- to C-terminus: Sulfhydrogenase 1 subunit gamma (292 aa).

The region spanning 15-115 (YALHRVKVLK…RGPYGNGFPV (101 aa)) is the FAD-binding FR-type domain. Residues Cys-253, Cys-258, Cys-261, and Cys-273 each coordinate [2Fe-2S] cluster.

As to quaternary structure, heterotetramer of alpha, beta, gamma and delta subunits. The nickel-containing alpha and delta subunits constitute the hydrogenase activity. The beta and gamma subunits (flavin-containing dimer) constitute the sulfur reductase activity. It depends on FAD as a cofactor. [2Fe-2S] cluster is required as a cofactor.

Its subcellular location is the cytoplasm. The enzyme catalyses n sulfur + H2 = (n-1) sulfur + hydrogen sulfide + H(+). With respect to regulation, stimulated by rubredoxin at pH 7.6 but not ferredoxin. Functionally, part of a bifunctional enzyme complex that functions as an NADPH-dependent hydrogen-evolving hydrogenase with sulfur reducing activity. May play a role in hydrogen cycling during fermentative growth. Activity not exhibited with NAD. The beta and gamma subunits form the sulfur reducing component that catalyzes the cytoplasmic production of hydrogen sulfide in the presence of elemental sulfur. Not active in the presence of sodium sulfate, sodium sulfite, sodium thiosulfate or cysteine. In Pyrococcus furiosus (strain ATCC 43587 / DSM 3638 / JCM 8422 / Vc1), this protein is Sulfhydrogenase 1 subunit gamma.